The chain runs to 282 residues: Pseudokinase OPG198 (282 aa).

ATP is bound by residues Met1 and Lys30. The 282-residue stretch at 1-282 (MESFKYCFDN…DRLRRLFIQD (282 aa)) folds into the Protein kinase domain.

Belongs to the protein kinase superfamily. Ser/Thr protein kinase family. Poxviruses subfamily. In terms of assembly, interacts with B1/VPK1. Interacts with host VRK1. Interacts with host VRK2.

It localises to the host nucleus. Its activity is regulated as follows. Both catalytically active kinases B1/VPK1 and host VRK2 repress B12 inhibitory activity in a B1/VPK1 deletion mutant strain. Its function is as follows. Pseudokinase that plays a role in viral DNA replication repression by activating the antiviral protein BANF1 and inhibiting the activity of host VRK1, a cellular modulator of BANF1. The sequence is that of Pseudokinase OPG198 (OPG198) from Cynomys gunnisoni (Gunnison's prairie dog).